A 339-amino-acid chain; its full sequence is Arylacetonitrilase (339 aa).

One can recognise a CN hydrolase domain in the interval 5–290; that stretch reads IRVAVTQAEP…EGIVYADLDL (286 aa). Glu-45 acts as the Proton acceptor in catalysis. Lys-126 is an active-site residue. Residue Cys-167 is the Nucleophile of the active site.

It belongs to the carbon-nitrogen hydrolase superfamily. Nitrilase family.

It carries out the reaction a nitrile + 2 H2O = a carboxylate + NH4(+). It catalyses the reaction 4-chlorophenylacetonitrile + 2 H2O = 4-chlorophenylacetate + NH4(+). Its function is as follows. Nitrilase that hydrolyzes preferentially phenylacetonitrile, (R,S)-mandelonitrile, and 3-indolylacetonitrile. In Fusarium vanettenii (strain ATCC MYA-4622 / CBS 123669 / FGSC 9596 / NRRL 45880 / 77-13-4) (Fusarium solani subsp. pisi), this protein is Arylacetonitrilase.